The sequence spans 213 residues: LexA repressor (213 aa).

Positions 29–49 (VREICNAVGFKSTSTVHSYLE) form a DNA-binding region, H-T-H motif. Residues S136 and K173 each act as for autocatalytic cleavage activity in the active site.

The protein belongs to the peptidase S24 family. As to quaternary structure, homodimer.

The catalysed reaction is Hydrolysis of Ala-|-Gly bond in repressor LexA.. Its function is as follows. Represses a number of genes involved in the response to DNA damage (SOS response), including recA and lexA. In the presence of single-stranded DNA, RecA interacts with LexA causing an autocatalytic cleavage which disrupts the DNA-binding part of LexA, leading to derepression of the SOS regulon and eventually DNA repair. The polypeptide is LexA repressor (Acetivibrio thermocellus (strain ATCC 27405 / DSM 1237 / JCM 9322 / NBRC 103400 / NCIMB 10682 / NRRL B-4536 / VPI 7372) (Clostridium thermocellum)).